The sequence spans 274 residues: Single-stranded DNA-binding protein WHY1, chloroplastic (274 aa).

Residues Met1–Lys54 constitute a chloroplast transit peptide. Positions Lys100–Leu105 are required for ssDNA binding. Residues Lys178 to Lys191 carry the Nuclear localization signal motif. A disordered region spans residues Pro253 to Arg274.

This sequence belongs to the Whirly family. In terms of assembly, homotetramer.

The protein resides in the nucleus. The protein localises to the plastid. Its subcellular location is the chloroplast. In terms of biological role, single-stranded DNA-binding protein that acts as a transcriptional activator of the pathogenesis-related gene PR-10a. Upon elicitation, binds a 30bp promoter sequence known as elicitor element response (ERE) and is required for PR-10a expression. The protein is Single-stranded DNA-binding protein WHY1, chloroplastic (WHY1) of Solanum tuberosum (Potato).